Here is a 155-residue protein sequence, read N- to C-terminus: MEVVIKISTTEAKKYLLIDTSVLPDVFEEVIQVKELLRSAKVKDITEAVKKVGISRSTYYKYKDYVFNVSDGLKSQKVTISILIEHRRGTLSEVLDKLAQRCCNILTINQDIPINNTANVNITFDISGISGDVKNIVEELKKIKNVLKVEIVAME.

The ACT domain maps to 79–154 (TISILIEHRR…NVLKVEIVAM (76 aa)).

This sequence belongs to the UPF0735 family.

In Clostridium acetobutylicum (strain ATCC 824 / DSM 792 / JCM 1419 / IAM 19013 / LMG 5710 / NBRC 13948 / NRRL B-527 / VKM B-1787 / 2291 / W), this protein is UPF0735 ACT domain-containing protein CA_C1234.